The sequence spans 282 residues: Undecaprenyl-diphosphatase (282 aa).

Helical transmembrane passes span 90–110, 121–141, 194–214, 228–248, and 256–276; these read YRLG…GLFF, LWVV…AEYV, FGFL…LPDA, QLLV…AWLL, and MYWF…LLAT.

This sequence belongs to the UppP family.

The protein resides in the cell membrane. The catalysed reaction is di-trans,octa-cis-undecaprenyl diphosphate + H2O = di-trans,octa-cis-undecaprenyl phosphate + phosphate + H(+). Catalyzes the dephosphorylation of undecaprenyl diphosphate (UPP). Confers resistance to bacitracin. In Mycobacterium tuberculosis (strain ATCC 25618 / H37Rv), this protein is Undecaprenyl-diphosphatase.